The chain runs to 503 residues: Variant surface glycoprotein ILTAT 1.3 (503 aa).

Residues Met1–Ala29 form the signal peptide. Disulfide bonds link Cys42/Cys168 and Cys150/Cys206. N-linked (GlcNAc...) asparagine glycosylation is found at Asn419 and Asn432. A lipid anchor (GPI-anchor amidated aspartate) is attached at Asp480. The propeptide at Ser481–Phe503 is removed in mature form.

The protein resides in the cell membrane. Its function is as follows. VSG forms a coat on the surface of the parasite. The trypanosome evades the immune response of the host by expressing a series of antigenically distinct VSGs from an estimated 1000 VSG genes. The sequence is that of Variant surface glycoprotein ILTAT 1.3 from Trypanosoma brucei brucei.